Consider the following 220-residue polypeptide: Chloramphenicol acetyltransferase (220 aa).

The active-site Proton acceptor is His195.

It belongs to the chloramphenicol acetyltransferase family. In terms of assembly, homotrimer.

The catalysed reaction is chloramphenicol + acetyl-CoA = chloramphenicol 3-acetate + CoA. This enzyme is an effector of chloramphenicol resistance in bacteria. This chain is Chloramphenicol acetyltransferase (cat), found in Streptomyces acrimycini.